Reading from the N-terminus, the 269-residue chain is MSVLDEIIDGVRADLAERQARVSLDELKERAARAPQAKDGVAALRGEGVTVICEVKRSSPSKGALAAIADPAALAADYEAGGASVISVLTEERRFGGSLADLEAVRAKVDIPILRKDFIVTSYQLWEARAYGADLALLIVAALDQEALVSLIERAESIGLTPLVEAHDEEEAERAVDAGAKIIGVNARNLKDLKVDRSTFERVAPEIPDHIVKVAESGVRGPHDLIAYANAGADAVLVGESLVTGRDPRAAVADLVAAGAHPALRHGRG.

This sequence belongs to the TrpC family.

It catalyses the reaction 1-(2-carboxyphenylamino)-1-deoxy-D-ribulose 5-phosphate + H(+) = (1S,2R)-1-C-(indol-3-yl)glycerol 3-phosphate + CO2 + H2O. It functions in the pathway amino-acid biosynthesis; L-tryptophan biosynthesis; L-tryptophan from chorismate: step 4/5. The polypeptide is Indole-3-glycerol phosphate synthase (Streptomyces griseus subsp. griseus (strain JCM 4626 / CBS 651.72 / NBRC 13350 / KCC S-0626 / ISP 5235)).